Reading from the N-terminus, the 100-residue chain is Urease subunit gamma (100 aa).

It belongs to the urease gamma subunit family. In terms of assembly, heterotrimer of UreA (gamma), UreB (beta) and UreC (alpha) subunits. Three heterotrimers associate to form the active enzyme.

It localises to the cytoplasm. The enzyme catalyses urea + 2 H2O + H(+) = hydrogencarbonate + 2 NH4(+). Its pathway is nitrogen metabolism; urea degradation; CO(2) and NH(3) from urea (urease route): step 1/1. This chain is Urease subunit gamma, found in Ruegeria sp. (strain TM1040) (Silicibacter sp.).